Here is a 138-residue protein sequence, read N- to C-terminus: Molluscan insulin-related peptide 5 (138 aa).

The signal sequence occupies residues 1 to 31 (MAGVRLVFTKAFMVTVLLTLLLNIGVKPAEG). Glutamine 32 is subject to Pyrrolidone carboxylic acid. 3 cysteine pairs are disulfide-bonded: cysteine 48/cysteine 124, cysteine 60/cysteine 137, and cysteine 123/cysteine 128. Positions 72 to 84 (DAETGWLLPETMV) are cleaved as a propeptide — C-beta peptide like. The propeptide at 87-111 (NAQTDLDDPLRNIKLSSESALTYLT) is C-alpha peptide like. Glutamine 114 carries the post-translational modification Pyrrolidone carboxylic acid.

The protein belongs to the insulin family. Heterodimer of a B chain and an A chain linked by two disulfide bonds. As to expression, expressed in the cerebral light-green cells which are giant neuroendocrines cells involved in the control of growth.

The protein localises to the cytoplasmic vesicle. Its subcellular location is the secretory vesicle. The polypeptide is Molluscan insulin-related peptide 5 (Lymnaea stagnalis (Great pond snail)).